A 306-amino-acid chain; its full sequence is UDP-N-acetylenolpyruvoylglucosamine reductase (306 aa).

The FAD-binding PCMH-type domain occupies 34–198 (VGGPADLLIT…LEVTFKLHNS (165 aa)). Arginine 177 is an active-site residue. The active-site Proton donor is the serine 227. The active site involves glutamate 297.

It belongs to the MurB family. FAD serves as cofactor.

It is found in the cytoplasm. It carries out the reaction UDP-N-acetyl-alpha-D-muramate + NADP(+) = UDP-N-acetyl-3-O-(1-carboxyvinyl)-alpha-D-glucosamine + NADPH + H(+). The protein operates within cell wall biogenesis; peptidoglycan biosynthesis. Functionally, cell wall formation. The chain is UDP-N-acetylenolpyruvoylglucosamine reductase from Clostridium botulinum (strain 657 / Type Ba4).